The primary structure comprises 249 residues: Probable cobalt-factor III C(17)-methyltransferase (249 aa).

Belongs to the precorrin methyltransferase family.

It carries out the reaction Co(II)-factor III + S-adenosyl-L-methionine + H(+) = Co(II)-factor IV + S-adenosyl-L-homocysteine. It functions in the pathway cofactor biosynthesis; adenosylcobalamin biosynthesis; cob(II)yrinate a,c-diamide from sirohydrochlorin (anaerobic route): step 3/10. In terms of biological role, methyltransferase that likely catalyzes the ring contraction and methylation of C-17 in cobalt-factor III to form cobalt-factor IV. May also convert cobalt-precorrin-3 to cobalt-precorrin-4. The protein is Probable cobalt-factor III C(17)-methyltransferase (cbiH) of Methanocaldococcus jannaschii (strain ATCC 43067 / DSM 2661 / JAL-1 / JCM 10045 / NBRC 100440) (Methanococcus jannaschii).